The following is a 495-amino-acid chain: UDP-glycosyltransferase 73C5 (495 aa).

The chain crosses the membrane as a helical span at residues 146-162 (ILFHGMGCFCLLCMHVL). UDP-alpha-D-glucose is bound by residues Ser296, 356-358 (SPQ), 373-381 (HCGWNSTLE), and 395-398 (FADQ). Residues 446–477 (MGESDDAKERRRRAKELGDSAHKAVEEGGSSH) are disordered. The span at 450–471 (DDAKERRRRAKELGDSAHKAVE) shows a compositional bias: basic and acidic residues.

The protein belongs to the UDP-glycosyltransferase family. As to expression, elongating hypocotyls and root-specific. Expressed in the vascular system, in meristematic tissues of the root tip, and in the vasculature of the hypocotyl right after germination. In late stage of flower development, expressed in petals, and in abscission zones.

The protein localises to the membrane. Specifically catalyzes 23-O-glucosylation of brassinosteroids, resulting probably in their inactivation. Also, involved in the O-glucosylation of trans-zeatin and dihydrozeatin. Active in vitro on cis-zeatin, dihydrozeatin-9-N-Glc, and olomoucine. Also involved in the detoxification of the Fusarium mycotoxin deoxynivalenol by the transfer of glucose from UDP-glucose to the hydroxyl group at C-3. Possesses low quercetin 7-O-glucosyltransferase and 4'-O-glucosyltransferase activities in vitro. This is UDP-glycosyltransferase 73C5 (UGT73C5) from Arabidopsis thaliana (Mouse-ear cress).